Consider the following 263-residue polypeptide: Trans-2-decenoyl-[acyl-carrier-protein] isomerase (263 aa).

The protein belongs to the enoyl-CoA hydratase/isomerase family. Homotetramer.

The enzyme catalyses (2E)-decenoyl-[ACP] = (3Z)-decenoyl-[ACP]. The protein operates within lipid metabolism; fatty acid biosynthesis. In terms of biological role, catalyzes the isomerization of trans-2-decenoyl-ACP to cis-3-decenoyl-ACP. Required for survival at low pH. In Streptococcus mutans serotype c (strain ATCC 700610 / UA159), this protein is Trans-2-decenoyl-[acyl-carrier-protein] isomerase (fabM).